The primary structure comprises 429 residues: Enolase (429 aa).

Residue Q162 coordinates (2R)-2-phosphoglycerate. The active-site Proton donor is E204. D241, E286, and D313 together coordinate Mg(2+). Residues K338, R367, S368, and K389 each coordinate (2R)-2-phosphoglycerate. The active-site Proton acceptor is K338.

This sequence belongs to the enolase family. The cofactor is Mg(2+).

It localises to the cytoplasm. The protein resides in the secreted. It is found in the cell surface. It catalyses the reaction (2R)-2-phosphoglycerate = phosphoenolpyruvate + H2O. It functions in the pathway carbohydrate degradation; glycolysis; pyruvate from D-glyceraldehyde 3-phosphate: step 4/5. Catalyzes the reversible conversion of 2-phosphoglycerate (2-PG) into phosphoenolpyruvate (PEP). It is essential for the degradation of carbohydrates via glycolysis. The protein is Enolase of Shouchella clausii (strain KSM-K16) (Alkalihalobacillus clausii).